The chain runs to 223 residues: Deoxyribose-phosphate aldolase (223 aa).

The Proton donor/acceptor role is filled by aspartate 89. Lysine 152 acts as the Schiff-base intermediate with acetaldehyde in catalysis. The active-site Proton donor/acceptor is the lysine 181.

The protein belongs to the DeoC/FbaB aldolase family. DeoC type 1 subfamily.

It localises to the cytoplasm. The enzyme catalyses 2-deoxy-D-ribose 5-phosphate = D-glyceraldehyde 3-phosphate + acetaldehyde. Its pathway is carbohydrate degradation; 2-deoxy-D-ribose 1-phosphate degradation; D-glyceraldehyde 3-phosphate and acetaldehyde from 2-deoxy-alpha-D-ribose 1-phosphate: step 2/2. Its function is as follows. Catalyzes a reversible aldol reaction between acetaldehyde and D-glyceraldehyde 3-phosphate to generate 2-deoxy-D-ribose 5-phosphate. This chain is Deoxyribose-phosphate aldolase, found in Bacillus cytotoxicus (strain DSM 22905 / CIP 110041 / 391-98 / NVH 391-98).